The primary structure comprises 88 residues: Phosphocarrier protein HPr (88 aa).

Positions 1-88 (MEKKEFHIVA…ETLQKEGLAE (88 aa)) constitute an HPr domain. The Pros-phosphohistidine intermediate role is filled by His15. Phosphoserine; by HPrK/P is present on Ser46.

The protein belongs to the HPr family. In terms of assembly, monomer.

The protein resides in the cytoplasm. With respect to regulation, phosphorylation on Ser-46 inhibits the phosphoryl transfer from enzyme I to HPr. In terms of biological role, general (non sugar-specific) component of the phosphoenolpyruvate-dependent sugar phosphotransferase system (sugar PTS). This major carbohydrate active-transport system catalyzes the phosphorylation of incoming sugar substrates concomitantly with their translocation across the cell membrane. The phosphoryl group from phosphoenolpyruvate (PEP) is transferred to the phosphoryl carrier protein HPr by enzyme I. Phospho-HPr then transfers it to the PTS EIIA domain. P-Ser-HPr interacts with the catabolite control protein A (CcpA), forming a complex that binds to DNA at the catabolite response elements cre, operator sites preceding a large number of catabolite-regulated genes. Thus, P-Ser-HPr is a corepressor in carbon catabolite repression (CCR), a mechanism that allows bacteria to coordinate and optimize the utilization of available carbon sources. P-Ser-HPr also plays a role in inducer exclusion, in which it probably interacts with several non-PTS permeases and inhibits their transport activity. The polypeptide is Phosphocarrier protein HPr (ptsH) (Enterococcus faecalis (strain ATCC 700802 / V583)).